Here is a 392-residue protein sequence, read N- to C-terminus: Phosphopentomutase (392 aa).

Mn(2+)-binding residues include Asp13, Asp286, His291, Asp327, His328, and His339.

The protein belongs to the phosphopentomutase family. The cofactor is Mn(2+).

Its subcellular location is the cytoplasm. It catalyses the reaction 2-deoxy-alpha-D-ribose 1-phosphate = 2-deoxy-D-ribose 5-phosphate. It carries out the reaction alpha-D-ribose 1-phosphate = D-ribose 5-phosphate. The protein operates within carbohydrate degradation; 2-deoxy-D-ribose 1-phosphate degradation; D-glyceraldehyde 3-phosphate and acetaldehyde from 2-deoxy-alpha-D-ribose 1-phosphate: step 1/2. In terms of biological role, isomerase that catalyzes the conversion of deoxy-ribose 1-phosphate (dRib-1-P) and ribose 1-phosphate (Rib-1-P) to deoxy-ribose 5-phosphate (dRib-5-P) and ribose 5-phosphate (Rib-5-P), respectively. This Oceanobacillus iheyensis (strain DSM 14371 / CIP 107618 / JCM 11309 / KCTC 3954 / HTE831) protein is Phosphopentomutase.